We begin with the raw amino-acid sequence, 503 residues long: TGF-beta receptor type-1 (503 aa).

The signal sequence occupies residues 1-29 (MEAAAAAPRRPQLLIVLVAAATLLPGAKA). Residues 30 to 126 (LQCFCHLCTK…QSAGLGPVEL (97 aa)) lie on the Extracellular side of the membrane. Disulfide bonds link C32–C50, C34–C37, C44–C67, C82–C96, and C97–C102. A glycan (N-linked (GlcNAc...) asparagine) is linked at N41. Residues 127–147 (AAVIAGPVCFVCIALMLMVYI) traverse the membrane as a helical segment. Residues 148–503 (CHNRTVIHHR…QLSQQEGIKM (356 aa)) lie on the Cytoplasmic side of the membrane. Residue S165 is modified to Phosphoserine. Residues 175 to 204 (TTLKDLIYDMTTSGSGSGLPLLVQRTIART) enclose the GS domain. T185 and T186 each carry phosphothreonine; by TGFBR2. 3 positions are modified to phosphoserine; by TGFBR2: S187, S189, and S191. The FKBP1A-binding signature appears at 193 to 194 (LP). Positions 205-495 (IVLQESIGKG…LRIKKTLSQL (291 aa)) constitute a Protein kinase domain. ATP contacts are provided by residues 211–219 (IGKGRFGEV) and K232. A Glycyl lysine isopeptide (Lys-Gly) (interchain with G-Cter in ubiquitin) cross-link involves residue K268. D333 acts as the Proton acceptor in catalysis. A Glycyl lysine isopeptide (Lys-Gly) (interchain with G-Cter in SUMO) cross-link involves residue K391.

It belongs to the protein kinase superfamily. TKL Ser/Thr protein kinase family. TGFB receptor subfamily. Homodimer; in the endoplasmic reticulum but also at the cell membrane. Heterohexamer; TGFB1, TGFB2 and TGFB3 homodimeric ligands assemble a functional receptor composed of two TGFBR1 and TGFBR2 heterodimers to form a ligand-receptor heterohexamer. The respective affinity of TGBRB1 and TGFBR2 for the ligands may modulate the kinetics of assembly of the receptor and may explain the different biological activities of TGFB1, TGFB2 and TGFB3. Component of a complex composed of TSC22D1 (via N-terminus), TGFBR1 and TGFBR2; the interaction between TSC22D1 and TGFBR1 is inhibited by SMAD7 and promoted by TGFB1. Interacts with CD109; inhibits TGF-beta receptor activation in keratinocytes. Interacts with RBPMS. Interacts (unphosphorylated) with FKBP1A; prevents TGFBR1 phosphorylation by TGFBR2 and stabilizes it in the inactive conformation. Interacts with SMAD2, SMAD3 and ZFYVE9; ZFYVE9 recruits SMAD2 and SMAD3 to the TGF-beta receptor. Interacts with TRAF6 and MAP3K7; induces MAP3K7 activation by TRAF6. Interacts with PARD6A; involved in TGF-beta induced epithelial to mesenchymal transition. Interacts with NEDD4L. Interacts with SMAD7, SMURF1 and SMURF2; SMAD7 recruits NEDD4L, SMURF1 and SMURF2 to the TGF-beta receptor. Interacts with USP15 and VPS39. Interacts with SDCBP (via C-terminus). Interacts with CAV1 and this interaction is impaired in the presence of SDCBP. Interacts with APPL1; interaction is TGF beta dependent; mediates trafficking of the TGFBR1 from the endosomes to the nucleus via microtubules in a TRAF6-dependent manner. Interacts with GPR50; this interaction promotes the constitutive activation of SMAD signaling pathway. It depends on Mg(2+) as a cofactor. Mn(2+) serves as cofactor. Phosphorylated at basal levels in the absence of ligand. Activated upon phosphorylation by TGFBR2, mainly in the GS domain. Phosphorylation in the GS domain abrogates FKBP1A-binding. In terms of processing, N-Glycosylated. Post-translationally, ubiquitinated; undergoes ubiquitination catalyzed by several E3 ubiquitin ligases including SMURF1, SMURF2 and NEDD4L2. Results in the proteasomal and/or lysosomal degradation of the receptor thereby negatively regulating its activity. Deubiquitinated by USP15, leading to stabilization of the protein and enhanced TGF-beta signal. Its ubiquitination and proteasome-mediated degradation is negatively regulated by SDCBP. Ubiquitinated by BFAR via'Lys-63'-linked ubiquitination at Lys-268, leading to TGF-beta signaling activation.

Its subcellular location is the cell membrane. The protein resides in the cell junction. It localises to the tight junction. The protein localises to the membrane raft. It is found in the cell surface. The enzyme catalyses L-threonyl-[receptor-protein] + ATP = O-phospho-L-threonyl-[receptor-protein] + ADP + H(+). The catalysed reaction is L-seryl-[receptor-protein] + ATP = O-phospho-L-seryl-[receptor-protein] + ADP + H(+). Kept in an inactive conformation by FKBP1A preventing receptor activation in absence of ligand. CD109 is another inhibitor of the receptor. Functionally, transmembrane serine/threonine kinase forming with the TGF-beta type II serine/threonine kinase receptor, TGFBR2, the non-promiscuous receptor for the TGF-beta cytokines TGFB1, TGFB2 and TGFB3. Transduces the TGFB1, TGFB2 and TGFB3 signal from the cell surface to the cytoplasm and is thus regulating a plethora of physiological and pathological processes including cell cycle arrest in epithelial and hematopoietic cells, control of mesenchymal cell proliferation and differentiation, wound healing, extracellular matrix production, immunosuppression and carcinogenesis. The formation of the receptor complex composed of 2 TGFBR1 and 2 TGFBR2 molecules symmetrically bound to the cytokine dimer results in the phosphorylation and the activation of TGFBR1 by the constitutively active TGFBR2. Activated TGFBR1 phosphorylates SMAD2 which dissociates from the receptor and interacts with SMAD4. The SMAD2-SMAD4 complex is subsequently translocated to the nucleus where it modulates the transcription of the TGF-beta-regulated genes. This constitutes the canonical SMAD-dependent TGF-beta signaling cascade. Also involved in non-canonical, SMAD-independent TGF-beta signaling pathways. For instance, TGFBR1 induces TRAF6 autoubiquitination which in turn results in MAP3K7 ubiquitination and activation to trigger apoptosis. Also regulates epithelial to mesenchymal transition through a SMAD-independent signaling pathway through PARD6A phosphorylation and activation. The protein is TGF-beta receptor type-1 (Tgfbr1) of Mus musculus (Mouse).